We begin with the raw amino-acid sequence, 493 residues long: Glutamyl-tRNA(Gln) amidotransferase subunit A (493 aa).

Residues lysine 79 and serine 159 each act as charge relay system in the active site. Serine 183 serves as the catalytic Acyl-ester intermediate.

The protein belongs to the amidase family. GatA subfamily. In terms of assembly, heterotrimer of A, B and C subunits.

It catalyses the reaction L-glutamyl-tRNA(Gln) + L-glutamine + ATP + H2O = L-glutaminyl-tRNA(Gln) + L-glutamate + ADP + phosphate + H(+). In terms of biological role, allows the formation of correctly charged Gln-tRNA(Gln) through the transamidation of misacylated Glu-tRNA(Gln) in organisms which lack glutaminyl-tRNA synthetase. The reaction takes place in the presence of glutamine and ATP through an activated gamma-phospho-Glu-tRNA(Gln). This Brucella melitensis biotype 2 (strain ATCC 23457) protein is Glutamyl-tRNA(Gln) amidotransferase subunit A.